The following is a 490-amino-acid chain: Beta-1,3-glucan-binding protein 1 (490 aa).

Positions 1–19 are cleaved as a signal peptide; the sequence is MYKQTVVIFLLCFFICVSC. Residues 20-119 enclose the CBM39 domain; it reads YEVPPAKLEA…GEWTVTGYVD (100 aa). Positions 152–490 constitute a GH16 domain; it reads PPTSQNTYPC…QVDYVRVYAL (339 aa). Asn372 carries an N-linked (GlcNAc...) asparagine glycan.

The protein belongs to the insect beta-1,3-glucan binding protein family. As to quaternary structure, monomer. In terms of tissue distribution, hemolymph.

The protein resides in the secreted. Its function is as follows. Plays a role in the recognition of invading microorganisms activating the phenoloxidase cascade. Binds specifically to beta-1,3-glucan. Binds the Aspergillus niger cell wall component alpha-1,3-glucan, a fungal pathogen-associated molecular pattern (PAMP) that activates the host immune response. This chain is Beta-1,3-glucan-binding protein 1, found in Galleria mellonella (Greater wax moth).